Consider the following 638-residue polypeptide: Guanylate-binding protein 7 (638 aa).

Positions 1-310 (MASGPNMEAP…DAINSGDVPC (310 aa)) are GTPase domain (Globular). Positions 35-277 (TQPVVVVAIV…FCSYIFSNSK (243 aa)) constitute a GB1/RHD3-type G domain. GTP-binding positions include 45 to 52 (GLYRTGKS), 67 to 69 (LGT), and 97 to 101 (DTEGL). Positions 311–638 (LENAVTTLAQ…TQNSDKVRKL (328 aa)) are interaction with the CYBA-CYBB complex. Residues 590 to 638 (SSLGAKILDGFGDVLISVVPGSGKYFGLGLKILSSQMNQTQNSDKVRKL) are C-terminal tail; required for its localization to cytoplasmic vesicle.

The protein belongs to the TRAFAC class dynamin-like GTPase superfamily. GB1/RHD3 GTPase family. GB1 subfamily. As to quaternary structure, monomer and dimer. Interacts with CYBA, CYBA-CYBB complex and ATG4B. Interacts (via GB1/RHD3-type G domain) with NCF2 and NCF2-NCF4 complex.

It is found in the cytoplasmic vesicle membrane. It carries out the reaction GTP + H2O = GDP + phosphate + H(+). The catalysed reaction is GDP + H2O = GMP + phosphate + H(+). Its activity is regulated as follows. Inhibited by orthovanadate, berylium fluoride and aluminum flouride. Functionally, interferon (IFN)-inducible GTPase that plays important roles in innate immunity against a diverse range of bacterial, viral and protozoan pathogens. Hydrolyzes GTP to GMP in two consecutive cleavage reactions and predominantly uses GTP and not GDP or GMP as the substrate. Following infection, recruited to the pathogen-containing vacuoles or vacuole-escaped bacteria and acts as a positive regulator of inflammasome assembly by promoting the release of inflammasome ligands from bacteria. Acts by promoting lysis of pathogen-containing vacuoles, releasing pathogens into the cytosol. Following pathogen release in the cytosol, promotes recruitment of proteins that mediate bacterial cytolysis, such as Gm12250/Irgb10: this liberates ligands that are detected by inflammasomes, such as lipopolysaccharide (LPS) that activates the non-canonical CASP4/CASP11 inflammasome or double-stranded DNA (dsDNA) that activates the AIM2 inflammasome. Also promotes IFN-gamma-mediated host defense against bacterial infections by regulating oxidative responses and bacteriolytic peptide generation. May help to assemble NADPH oxidase on phagosomal membranes by acting as a bridging protein between NADPH oxidase cytosolic subunits NCF2-NCF4 and the membrane subunits CYBA-CYBB. Participates along with GBP1 in trafficking monoubiquinated protein cargo to autolysosomes for generating ubiquitin-derived antimicrobial peptides. Facilitates influenza A virus replication by inhibiting the activation of NF-kappaB and JAK-STAT signaling pathways and the expression of type I, type III interferons and pro-inflammatory cytokines. Confers protection to several pathogens, including the bacterial pathogens Listeria monocytogenes and Mycobacterium bovis BCG as well as the protozoan pathogen Toxoplasma gondii. Required for disruption of the parasitophorous vacuole formed following T.gondii infection and subsequent killing of the parasite. The chain is Guanylate-binding protein 7 (Gbp7) from Mus musculus (Mouse).